The sequence spans 410 residues: Lipid droplet-regulating VLDL assembly factor AUP1 (410 aa).

At Met-1 the chain carries N-acetylmethionine. At 1-20 the chain is on the cytoplasmic side; it reads MEPPPAPGPERLFDSHRLPS. An intramembrane segment occupies 21–41; that stretch reads DGFLLLALLLYAPVGLCLLVL. Residues 42–410 are Cytoplasmic-facing; the sequence is RLFLGLHVFL…FRERQAQEAE (369 aa). The disordered stretch occupies residues 259–293; that stretch reads LTPADKAEHMKRQRHPRLRPQSVQSSFPSPPSPSS. Ser-292 is subject to Phosphoserine. The 43-residue stretch at 296-338 folds into the CUE domain; it reads QLTILAQRVKEVLPHVPLNVIQRDLARTGCVDLTITNLLEGAV. The tract at residues 348–367 is disordered; sequence GSQSLPTASAPKFPSSGLVT. A Phosphoserine modification is found at Ser-363. Thr-367 is subject to Phosphothreonine.

Belongs to the AUP1 family. In terms of assembly, identified in a complex that contains SEL1L, OS9, FAF2/UBXD8, UBE2J1/UBC6E and AUP1. Interacts with the cytoplasmic tail of ITGA2B, ITGA1, ITGA2, ITGA5, ITGAV and ITGAM. Interacts (via C-terminus) with UBE2G2; the interaction recruits UBE2G2 to lipid droplets. Interacts with ubiquitin ligases AMFR/gp78 and RNF139/TRC8; this promotes interaction of UBE2G2 with AMFR and RNF139. Interacts with apolipoprotein APOB. Post-translationally, monoubiquitinated and diubiquitinated.

The protein resides in the endoplasmic reticulum membrane. It is found in the lipid droplet. Plays a role in the translocation of terminally misfolded proteins from the endoplasmic reticulum lumen to the cytoplasm and their degradation by the proteasome. Plays a role in lipid droplet formation. Induces lipid droplet clustering. Recruits ubiquitin-conjugating enzyme UBE2G2 to lipid droplets which facilitates its interaction with ubiquitin ligases AMFR/gp78 and RNF139/TRC8, leading to sterol-induced ubiquitination of HMGCR and its subsequent proteasomal degradation. Also required for the degradation of INSIG1, SREBF1 and SREBF2. Plays a role in regulating assembly and secretion of very low density lipoprotein particles and stability of apolipoprotein APOB. This chain is Lipid droplet-regulating VLDL assembly factor AUP1, found in Rattus norvegicus (Rat).